The sequence spans 135 residues: Glutaredoxin-C3 (135 aa).

One can recognise a Glutaredoxin domain in the interval 26–134 (VARVERLASE…PLLKEAGALW (109 aa)). Cys46 and Cys49 are disulfide-bonded. Residues 132–135 (ALWL) carry the Responsive for interaction with TGA factors motif.

Belongs to the glutaredoxin family. CC-type subfamily.

Its subcellular location is the cytoplasm. It is found in the nucleus. Has a glutathione-disulfide oxidoreductase activity in the presence of NADPH and glutathione reductase. Reduces low molecular weight disulfides and proteins. In Oryza sativa subsp. japonica (Rice), this protein is Glutaredoxin-C3 (GRXC3).